Here is a 165-residue protein sequence, read N- to C-terminus: ATP synthase subunit b (165 aa).

A helical transmembrane segment spans residues 5 to 25 (LVGITWEFVFQIVNTFIIFLL).

Belongs to the ATPase B chain family. F-type ATPases have 2 components, F(1) - the catalytic core - and F(0) - the membrane proton channel. F(1) has five subunits: alpha(3), beta(3), gamma(1), delta(1), epsilon(1). F(0) has three main subunits: a(1), b(2) and c(10-14). The alpha and beta chains form an alternating ring which encloses part of the gamma chain. F(1) is attached to F(0) by a central stalk formed by the gamma and epsilon chains, while a peripheral stalk is formed by the delta and b chains.

The protein resides in the cell membrane. Functionally, f(1)F(0) ATP synthase produces ATP from ADP in the presence of a proton or sodium gradient. F-type ATPases consist of two structural domains, F(1) containing the extramembraneous catalytic core and F(0) containing the membrane proton channel, linked together by a central stalk and a peripheral stalk. During catalysis, ATP synthesis in the catalytic domain of F(1) is coupled via a rotary mechanism of the central stalk subunits to proton translocation. In terms of biological role, component of the F(0) channel, it forms part of the peripheral stalk, linking F(1) to F(0). The sequence is that of ATP synthase subunit b from Clostridioides difficile (strain 630) (Peptoclostridium difficile).